Consider the following 142-residue polypeptide: Transcription antitermination protein NusB (142 aa).

Belongs to the NusB family.

Its function is as follows. Involved in transcription antitermination. Required for transcription of ribosomal RNA (rRNA) genes. Binds specifically to the boxA antiterminator sequence of the ribosomal RNA (rrn) operons. This chain is Transcription antitermination protein NusB, found in Borrelia garinii subsp. bavariensis (strain ATCC BAA-2496 / DSM 23469 / PBi) (Borreliella bavariensis).